An 88-amino-acid polypeptide reads, in one-letter code: Small ribosomal subunit protein bS20 (88 aa).

The disordered stretch occupies residues 1–27; it reads MANTKQAQKRARQAEQRRQHNASQRSM.

It belongs to the bacterial ribosomal protein bS20 family.

Functionally, binds directly to 16S ribosomal RNA. The protein is Small ribosomal subunit protein bS20 of Chromohalobacter salexigens (strain ATCC BAA-138 / DSM 3043 / CIP 106854 / NCIMB 13768 / 1H11).